Reading from the N-terminus, the 463-residue chain is ATP sulfurylase 1, chloroplastic (463 aa).

The N-terminal 48 residues, 1–48, are a transit peptide targeting the chloroplast; that stretch reads MASMAAVLSKTPFLSQPLTKSSPNSDLPFAAVSFPSKSLRRRVGSIRA.

Belongs to the sulfate adenylyltransferase family. As to quaternary structure, homotetramer.

The protein localises to the plastid. It localises to the chloroplast stroma. The enzyme catalyses sulfate + ATP + H(+) = adenosine 5'-phosphosulfate + diphosphate. The protein operates within sulfur metabolism; hydrogen sulfide biosynthesis; sulfite from sulfate: step 1/3. In terms of biological role, mediates selenate (Se) reduction, and promotes Se and sulfur (S) uptake and assimilation. In Arabidopsis thaliana (Mouse-ear cress), this protein is ATP sulfurylase 1, chloroplastic (APS1).